A 457-amino-acid polypeptide reads, in one-letter code: MIKEYKSIQEVAGPLMLINGVEGVKFDELGEIELSNGEIRRCKVLEVNGDTALVQLFESSTGINLAESKVRFLGKSLDFGVSPDILGRVFSGMGRPIDGGPEIIPDKRLDINGAPINPAARDYPAEFIQTGVSAIDGLNTLVRGQKLPIFSGSGLPHANLAVQIARQAKVRGTDSKFAVVFAAVGITFEDAEFFISDFKATGAIDRSVVFVNLANDPAVERVSTPRMALTAAEYLAFEQDMHVLVIITDITNYAEALREVSAAKKEVPGRRGYPGYLYTDLATMYERAGKMKGHEGSITMIPILTMPEDDKTHPIPDLTGYITEGQIILSRELYKKDIQPPIDVLPSLSRLKDKGIGKGKTREDHADTMNQLFAAYSRGKDAKELMAILGESALSEIDLMYAKFADEFEKEYVSQGFRTDRTIEQTLEIGWKLLSMLPKSELKRIRDEYFEKYMPKE.

It belongs to the ATPase alpha/beta chains family.

Functionally, produces ATP from ADP in the presence of a proton gradient across the membrane. The V-type beta chain is a regulatory subunit. This chain is V-type ATP synthase beta chain, found in Clostridioides difficile (strain 630) (Peptoclostridium difficile).